A 437-amino-acid polypeptide reads, in one-letter code: La-related protein 7 homolog (437 aa).

The 108-residue stretch at 38-145 (SKSPSLTIPK…KRKKKFDNRT (108 aa)) folds into the HTH La-type RNA-binding domain. The xRRM domain occupies 279–397 (ELSQSCFLKI…QRSSIDEIKA (119 aa)). Over residues 417 to 427 (RRPVSKRKNKA) the composition is skewed to basic residues. The tract at residues 417–437 (RRPVSKRKNKAINKMSTEVKK) is disordered.

The protein belongs to the LARP7 family. In terms of assembly, component of the telomerase holoenzyme complex composed minimally of the catalytic subunit p123 and the telomerase RNA template component. The mature form of the protein is a protein of 43 kDa, which is derived from a 51 kDa precursor by proteolytic cleavage.

The protein localises to the nucleus. It is found in the chromosome. It localises to the telomere. RNA-binding protein required for assembly of the holoenzyme telomerase ribonucleoprotein (RNP) complex. Specifically binds telomerase RNA and promotes its assembly with catalytic subunit p123, thereby stimulating enzymatic activity and processivity of p123. Telomerase is a ribonucleoprotein enzyme essential that copies new telomeric repeats onto chromosome ends and functions to maintain cell division. The polypeptide is La-related protein 7 homolog (Euplotes aediculatus (Ciliate)).